We begin with the raw amino-acid sequence, 174 residues long: Type II restriction enzyme Bsp6I (174 aa).

It carries out the reaction Endonucleolytic cleavage of DNA to give specific double-stranded fragments with terminal 5'-phosphates.. Its function is as follows. A P subtype restriction enzyme that recognizes the double-stranded sequence 5'-GCNGC-3' and cleaves after C-2. The chain is Type II restriction enzyme Bsp6I from Bacillus sp. (strain RFL6).